A 210-amino-acid polypeptide reads, in one-letter code: Protein GrpE (210 aa).

Positions M1–A42 are disordered.

Belongs to the GrpE family. In terms of assembly, homodimer.

The protein resides in the cytoplasm. Participates actively in the response to hyperosmotic and heat shock by preventing the aggregation of stress-denatured proteins, in association with DnaK and GrpE. It is the nucleotide exchange factor for DnaK and may function as a thermosensor. Unfolded proteins bind initially to DnaJ; upon interaction with the DnaJ-bound protein, DnaK hydrolyzes its bound ATP, resulting in the formation of a stable complex. GrpE releases ADP from DnaK; ATP binding to DnaK triggers the release of the substrate protein, thus completing the reaction cycle. Several rounds of ATP-dependent interactions between DnaJ, DnaK and GrpE are required for fully efficient folding. This is Protein GrpE from Nitrosococcus oceani (strain ATCC 19707 / BCRC 17464 / JCM 30415 / NCIMB 11848 / C-107).